A 762-amino-acid polypeptide reads, in one-letter code: Cell surface protein (762 aa).

The signal sequence occupies residues 1–26; it reads MKNLKKLIAVVSTFALVFSAMAVGFA. 3 consecutive SLH domains span residues 27–90, 92–155, and 156–204; these read ATTP…EMAK, EKSA…WPYG, and YLAK…KEVL. 4 O-linked (Glc...) tyrosine glycosylation sites follow: Y297, Y516, Y520, and Y632.

Glycosylated; contains 8% carbohydrates, which correspond to about 40 to 50 sugar molecules per monomer. O-linked glycans consist of Glc, GalNAc and GlcNAc.

Its subcellular location is the secreted. The protein resides in the cell wall. It is found in the S-layer. The S-layer is a paracrystalline mono-layered assembly of proteins which coat the surface of bacteria. The protein is Cell surface protein of Thermoanaerobacter kivui (Acetogenium kivui).